The sequence spans 227 residues: UPF0758 protein Spro_4842 (227 aa).

One can recognise an MPN domain in the interval 105-227 (AMLNPRMTQH…CVSFAERGWL (123 aa)). Positions 176, 178, and 189 each coordinate Zn(2+). The JAMM motif motif lies at 176-189 (HNHPSGKAEPSHAD).

Belongs to the UPF0758 family. YicR subfamily.

The protein is UPF0758 protein Spro_4842 of Serratia proteamaculans (strain 568).